The chain runs to 567 residues: Oxygen-dependent choline dehydrogenase (567 aa).

Position 6 to 35 (6 to 35) interacts with FAD; sequence DYIIVGAGSAGNTLATRLTEDEGVTVLLLE. Residues 182–203 form a disordered region; sequence QQEGFGPMDRTVTPKGRRASTA. Residue His475 is the Proton acceptor of the active site.

It belongs to the GMC oxidoreductase family. FAD serves as cofactor.

The enzyme catalyses choline + A = betaine aldehyde + AH2. It catalyses the reaction betaine aldehyde + NAD(+) + H2O = glycine betaine + NADH + 2 H(+). Its pathway is amine and polyamine biosynthesis; betaine biosynthesis via choline pathway; betaine aldehyde from choline (cytochrome c reductase route): step 1/1. Its function is as follows. Involved in the biosynthesis of the osmoprotectant glycine betaine. Catalyzes the oxidation of choline to betaine aldehyde and betaine aldehyde to glycine betaine at the same rate. This is Oxygen-dependent choline dehydrogenase from Pseudomonas fluorescens (strain ATCC BAA-477 / NRRL B-23932 / Pf-5).